The chain runs to 171 residues: ATP synthase subunit b (171 aa).

Residues 2 to 22 (FLVKMVLGFLILLSPLCATGL) traverse the membrane as a helical segment.

The protein belongs to the ATPase B chain family. In terms of assembly, F-type ATPases have 2 components, F(1) - the catalytic core - and F(0) - the membrane proton channel. F(1) has five subunits: alpha(3), beta(3), gamma(1), delta(1), epsilon(1). F(0) has three main subunits: a(1), b(2) and c(10-14). The alpha and beta chains form an alternating ring which encloses part of the gamma chain. F(1) is attached to F(0) by a central stalk formed by the gamma and epsilon chains, while a peripheral stalk is formed by the delta and b chains.

The protein localises to the cell inner membrane. F(1)F(0) ATP synthase produces ATP from ADP in the presence of a proton or sodium gradient. F-type ATPases consist of two structural domains, F(1) containing the extramembraneous catalytic core and F(0) containing the membrane proton channel, linked together by a central stalk and a peripheral stalk. During catalysis, ATP synthesis in the catalytic domain of F(1) is coupled via a rotary mechanism of the central stalk subunits to proton translocation. Its function is as follows. Component of the F(0) channel, it forms part of the peripheral stalk, linking F(1) to F(0). This chain is ATP synthase subunit b, found in Helicobacter pylori (strain HPAG1).